An 87-amino-acid polypeptide reads, in one-letter code: Serine rich endogenous peptide 17 (87 aa).

An N-terminal signal peptide occupies residues 1-28 (MTGKAPFFVILIAALLLLSSFFFGEVKA). The segment at 32-87 (KQPKHRKLGNREGDENRSNEIVVQMKARVKRSKSKRGPQKKEPYKKPPCSPPTHPA) is disordered. Residues 40–49 (GNREGDENRS) are compositionally biased toward basic and acidic residues. Residues 51–71 (EIVVQMKARVKRSKSKRGPQK) carry the SCOOP motif motif. A compositionally biased stretch (basic residues) spans 58–69 (ARVKRSKSKRGP). The SxS motif essential for MIK2 binding signature appears at 63–65 (SKS). Over residues 77 to 87 (KPPCSPPTHPA) the composition is skewed to pro residues.

It belongs to the serine rich endogenous peptide (SCOOP) phytocytokine family. In terms of assembly, interacts with MIK2 (via extracellular leucine-rich repeat domain); this interaction triggers the formation of complex between MIK2 and the BAK1/SERK3 and SERK4 coreceptors, and subsequent BAK1 activation by phosphorylation.

The protein resides in the cell membrane. Its subcellular location is the secreted. It is found in the extracellular space. The protein localises to the apoplast. In terms of biological role, brassicaceae-specific phytocytokine (plant endogenous peptide released into the apoplast) perceived by MIK2 in a BAK1/SERK3 and SERK4 coreceptors-dependent manner, that modulates various physiological and antimicrobial processes including growth prevention and reactive oxygen species (ROS) response regulation. The sequence is that of Serine rich endogenous peptide 17 from Arabidopsis thaliana (Mouse-ear cress).